Here is a 691-residue protein sequence, read N- to C-terminus: Glycine--tRNA ligase beta subunit (691 aa).

This sequence belongs to the class-II aminoacyl-tRNA synthetase family. As to quaternary structure, tetramer of two alpha and two beta subunits.

It localises to the cytoplasm. The catalysed reaction is tRNA(Gly) + glycine + ATP = glycyl-tRNA(Gly) + AMP + diphosphate. This chain is Glycine--tRNA ligase beta subunit, found in Limosilactobacillus reuteri (strain DSM 20016) (Lactobacillus reuteri).